Reading from the N-terminus, the 478-residue chain is Serine/threonine-protein phosphatase 2A activator 1 (478 aa).

The tract at residues 359-478 (DPSAIPPPSR…DITTKAPWAK (120 aa)) is disordered. Low complexity predominate over residues 396 to 419 (APWATASQSTPPPSTGTAAPWATS).

This sequence belongs to the PTPA-type PPIase family.

It is found in the cytoplasm. It localises to the nucleus. The catalysed reaction is [protein]-peptidylproline (omega=180) = [protein]-peptidylproline (omega=0). PPIases accelerate the folding of proteins. It catalyzes the cis-trans isomerization of proline imidic peptide bonds in oligopeptides. Acts as a regulatory subunit for PP2A-like phosphatases modulating their activity or substrate specificity, probably by inducing a conformational change in the catalytic subunit, a direct target of the PPIase. Can reactivate inactive phosphatase PP2A-phosphatase methylesterase complexes (PP2Ai) in presence of ATP and Mg(2+) by dissociating the inactive form from the complex. The chain is Serine/threonine-protein phosphatase 2A activator 1 (rrd1) from Aspergillus oryzae (strain ATCC 42149 / RIB 40) (Yellow koji mold).